Here is a 228-residue protein sequence, read N- to C-terminus: LNPKKKENNGVKNGDREKQHETGNTIFRGSPDKYLTEQGWMAQSDLGSRALVEDLVRYKLCQRSLVPEPSGAASCALHSAMRAAGDEFEERFRQAFSEISTQIHVTPGTAYARFAEVAGSLFQGGVNWGRIVAFFVFGAALCAESVNKEMSPLLPRIQDWMVTYLETNLRDWIQSNGGWNGFLTLYGDGAIEEARRQREGNWASLKTVLTGAVALGALMTVGALFASK.

A compositionally biased stretch (basic and acidic residues) spans 1–21 (LNPKKKENNGVKNGDREKQHE). The tract at residues 1 to 29 (LNPKKKENNGVKNGDREKQHETGNTIFRG) is disordered. A BH1 motif is present at residues 120 to 139 (SLFQGGVNWGRIVAFFVFGA). The BH2 motif lies at 171–186 (DWIQSNGGWNGFLTLY). Residues 207–227 (TVLTGAVALGALMTVGALFAS) traverse the membrane as a helical segment.

It belongs to the Bcl-2 family.

It localises to the membrane. Functionally, could be the homolog of mammalian Bcl-W. The polypeptide is Apoptosis regulator R1 (Xenopus laevis (African clawed frog)).